Consider the following 381-residue polypeptide: tRNA pseudouridine synthase D (381 aa).

Aspartate 81 functions as the Nucleophile in the catalytic mechanism. A TRUD domain is found at 160 to 335; it reads GMPNYFGSQR…TLGSRRFFWV (176 aa).

It belongs to the pseudouridine synthase TruD family.

The enzyme catalyses uridine(13) in tRNA = pseudouridine(13) in tRNA. Functionally, responsible for synthesis of pseudouridine from uracil-13 in transfer RNAs. The sequence is that of tRNA pseudouridine synthase D from Helicobacter pylori (strain J99 / ATCC 700824) (Campylobacter pylori J99).